We begin with the raw amino-acid sequence, 70 residues long: Homeobox protein OTX2 (70 aa).

A disordered region spans residues 34-70 (HQLPGPGATLSPMGTNAVTSHLNQSPASLSTQGYGAS). The span at 45–70 (PMGTNAVTSHLNQSPASLSTQGYGAS) shows a compositional bias: polar residues.

It belongs to the paired homeobox family. Bicoid subfamily.

The protein localises to the nucleus. Transcription factor probably involved in the development of the brain and the sense organs. Can bind to the bicoid/BCD target sequence (BTS): 5'-TCTAATCCC-3'. The polypeptide is Homeobox protein OTX2 (Otx2) (Rattus norvegicus (Rat)).